The sequence spans 338 residues: MSKRPYCIGEGLKKGAWTTEEDKKLISYIHDHGEGGWRDIPEKAGLKRCGKSCRLRWTNYLKPDIKRGEFSYEEEQIIIMLHASRGNKWSVIARHLPKRTDNEVKNYWNTHLKKRLIDDGIDPVTHKPLASSNPNPVEPMKFDFQKKSNQDEHSSQSSSTTPASLPLSSNLNSVKSKISSGETQIESGHVSCKKRFGRSSSTSRLLNKVAARASSIGNILSTSIEGTLRSPASSSGLPDSFSQSYEYMIDNKEDLGTSIDLNIPEYDFPQFLEQLINDDDENENIVGPEQDLLMSDFPSTFVDEDDILGDITSWSTYLLDHPNFMYESDQDSDEKNFL.

HTH myb-type domains follow at residues 9 to 65 (GEGL…KPDI) and 66 to 116 (KRGE…KKRL). 2 DNA-binding regions (H-T-H motif) span residues 37–61 (WRDIPEKAGLKRCGKSCRLRWTNYL) and 89–112 (WSVIARHLPKRTDNEVKNYWNTHL). Disordered stretches follow at residues 123 to 171 (PVTH…SSNL) and 176 to 195 (SKISSGETQIESGHVSCKKR). Positions 140–154 (MKFDFQKKSNQDEHS) are enriched in basic and acidic residues. Positions 155–171 (SQSSSTTPASLPLSSNL) are enriched in low complexity.

In terms of assembly, can form complexes with MYC2, MYC3 or MYC4. In terms of tissue distribution, expressed in both vegetative and generative organs. Mostly present in inflorescences, flowers and seedlings, in the transition zone between roots and the foliar part, and stems, and, to a lower extent, in leaves (in midvein and trichomes).

The protein resides in the nucleus. Functionally, plays a role in determining the spatial distribution of aliphatic glucosinolates (AGLSs) within the leaf, mostly short chained. Together with MYB28/HAG1 and MYB29/HAG3, promotes aliphatic glucosinolate biosynthesis and represses indolic glucosinolate biosynthesis, but could not activate AGSL biosynthesis on its own. This Arabidopsis thaliana (Mouse-ear cress) protein is Transcription factor MYB76 (MYB76).